The following is a 196-amino-acid chain: Large ribosomal subunit protein eL15 (196 aa).

A disordered region spans residues 162–196 (RGLTNAGRSNRGLQNRGKGAEHTRPSAGSGSRRGK).

This sequence belongs to the eukaryotic ribosomal protein eL15 family.

In Haloquadratum walsbyi (strain DSM 16790 / HBSQ001), this protein is Large ribosomal subunit protein eL15.